The primary structure comprises 217 residues: Snake venom metalloproteinase lebetase-4 (217 aa).

Positions 1 to 14 are excised as a propeptide; the sequence is SCRKKASQLNLTPE. Pyrrolidone carboxylic acid is present on Q15. In terms of domain architecture, Peptidase M12B spans 21-217; that stretch reads RYIELVIVAD…HNPQCILNQP (197 aa). Ca(2+) is bound by residues E24 and D108. 3 cysteine pairs are disulfide-bonded: C132–C212, C172–C196, and C174–C179. H157 is a Zn(2+) binding site. Residue E158 is part of the active site. H161 and H167 together coordinate Zn(2+). Positions 212 and 215 each coordinate Ca(2+).

Belongs to the venom metalloproteinase (M12B) family. P-I subfamily. In terms of assembly, monomer. Zn(2+) serves as cofactor. As to expression, expressed by the venom gland.

The protein localises to the secreted. With respect to regulation, fibrinolytic and caseinolytic activities are inhibited by Cd(2+), Cu(2+) and Co(2+) ions. Not inhibited by Mg(2+), Ca(2+) and Ba(2+). Also inhibited by EDTA, EGTA and 1,10-phenanthroline. Functionally, snake venom zinc metalloprotease that hydrolyzes the Aalpha-chain and more slowly the Bbeta-chain of fibrin and fibrinogen. Also hydrolyzes casein and B-chain of oxidized insulin. Its fibrinolytic activity is direct, without any plasminogen activation. Inhibits ADP-induced and collagen-induced platelet aggregation. Shows low hemorrhagic activity. Cleaves the plasma proteinase inhibitors alpha(2)-macroglobulin (A2M) and alpha(2)M-related pregnancy zone protein (PZP), and is inhibited by them. The polypeptide is Snake venom metalloproteinase lebetase-4 (Macrovipera lebetinus (Levantine viper)).